Consider the following 683-residue polypeptide: MSEVPAAIQEELNTLRETINDHNYRYYTLDDPSIPDAEYDRLMRRLREIEAEFPQTITPDSPTQRVGAAPAEGFETVSHRLPMLSLDNAFEEQDLLDFDRRVRERLKEAEDARIDYCCEPKLDGIAISLLYRDGYLVRGVTRGDGSAGEDITANVKTVKNIPLKLRGEGYPAELEVRGEIYLPKAAFDAINKDAAAKGEKTFVNPRNAAAGSLRQLDPRITAKRALEMCCYSVGYFEGELPGTQHDILTQLQQWGLKINSQMKLASGAQECLDYYRHIMSVRDQLPYEIDGVVFKVNRIDLQQELGFVSRAPRWAIAHKFPAHEEMTELLAVDFQVGRTGAVTPVARLKPVFVGGVTVSNATLHNMDEIRRLDVHIGDTVIIRRAGDVIPQVVSVVQDRRPENAVPVDRPEHCPVCGSDVLQLEGEAVARCSGGLYCSAQRKEAIKHFASRKAMDIDGLGDRLVELLVEKELIDSPASLYSLKAPDVAGLERMGEKSAQNLINAIEASKQTTFARFIYALGIREVGEATAKVLAQHFPTLDLLKQATEEDLVEAPDIGPISAGHIRSFFQQEHNLETIDALLNQGVSWPEVVVRSTETLPLSGQTAVVTGVLADYSRDEAKDLLTRLGAKVSGSVSAKTGFVVAGEKAGSKLTKAQDLGVKVLDEDAFKQLLEEHQAHLGGEA.

Residues 36-40, 85-86, and glutamate 119 each bind NAD(+); these read DAEYD and SL. The active-site N6-AMP-lysine intermediate is lysine 121. Residues arginine 142, glutamate 179, lysine 295, and lysine 319 each coordinate NAD(+). The Zn(2+) site is built by cysteine 413, cysteine 416, cysteine 431, and cysteine 437. In terms of domain architecture, BRCT spans 596–683; it reads TETLPLSGQT…EHQAHLGGEA (88 aa).

Belongs to the NAD-dependent DNA ligase family. LigA subfamily. Mg(2+) is required as a cofactor. Requires Mn(2+) as cofactor.

It catalyses the reaction NAD(+) + (deoxyribonucleotide)n-3'-hydroxyl + 5'-phospho-(deoxyribonucleotide)m = (deoxyribonucleotide)n+m + AMP + beta-nicotinamide D-nucleotide.. DNA ligase that catalyzes the formation of phosphodiester linkages between 5'-phosphoryl and 3'-hydroxyl groups in double-stranded DNA using NAD as a coenzyme and as the energy source for the reaction. It is essential for DNA replication and repair of damaged DNA. This Hahella chejuensis (strain KCTC 2396) protein is DNA ligase.